A 185-amino-acid chain; its full sequence is Ribosome-recycling factor (185 aa).

The protein belongs to the RRF family.

Its subcellular location is the cytoplasm. In terms of biological role, responsible for the release of ribosomes from messenger RNA at the termination of protein biosynthesis. May increase the efficiency of translation by recycling ribosomes from one round of translation to another. The sequence is that of Ribosome-recycling factor from Enterococcus faecalis (strain ATCC 700802 / V583).